The primary structure comprises 180 residues: Adenine phosphoribosyltransferase (180 aa).

Belongs to the purine/pyrimidine phosphoribosyltransferase family. As to quaternary structure, homodimer.

The protein resides in the cytoplasm. The enzyme catalyses AMP + diphosphate = 5-phospho-alpha-D-ribose 1-diphosphate + adenine. The protein operates within purine metabolism; AMP biosynthesis via salvage pathway; AMP from adenine: step 1/1. Its function is as follows. Catalyzes a salvage reaction resulting in the formation of AMP, that is energically less costly than de novo synthesis. The protein is Adenine phosphoribosyltransferase of Actinobacillus succinogenes (strain ATCC 55618 / DSM 22257 / CCUG 43843 / 130Z).